A 316-amino-acid polypeptide reads, in one-letter code: Neuroguidin (316 aa).

Disordered regions lie at residues 143 to 172 (SEADEGESDSGEDCAESGNAKKPQSKVKKY) and 280 to 316 (SALTGGEGRTDDLVPSVKKSRKGPKKSKKRKGFRKRH). Over residues 145 to 157 (ADEGESDSGEDCA) the composition is skewed to acidic residues. A compositionally biased stretch (basic residues) spans 297 to 316 (KKSRKGPKKSKKRKGFRKRH).

It belongs to the SAS10 family. In terms of assembly, part of the small subunit (SSU) processome, composed of more than 70 proteins and the RNA chaperone small nucleolar RNA (snoRNA) U3.

The protein resides in the nucleus. It localises to the nucleolus. Its subcellular location is the chromosome. The protein localises to the centromere. It is found in the cytoplasm. The protein resides in the cell projection. It localises to the axon. Its subcellular location is the dendrite. The protein localises to the filopodium. Part of the small subunit (SSU) processome, first precursor of the small eukaryotic ribosomal subunit. During the assembly of the SSU processome in the nucleolus, many ribosome biogenesis factors, an RNA chaperone and ribosomal proteins associate with the nascent pre-rRNA and work in concert to generate RNA folding, modifications, rearrangements and cleavage as well as targeted degradation of pre-ribosomal RNA by the RNA exosome. Its dissociation from the complex determines the transition from state pre-A1 to state pre-A1*. May inhibit mRNA translation. In Xenopus tropicalis (Western clawed frog), this protein is Neuroguidin (ngdn).